Here is a 393-residue protein sequence, read N- to C-terminus: Elongation factor Tu (393 aa).

The region spanning 10 to 203 is the tr-type G domain; it reads KPHVNIGTIG…AVDAFIPDPV (194 aa). The tract at residues 19–26 is G1; sequence GHVDHGKT. A GTP-binding site is contributed by 19 to 26; that stretch reads GHVDHGKT. Thr26 is a binding site for Mg(2+). Residues 60 to 64 are G2; sequence GITIS. The interval 81–84 is G3; it reads DCPG. GTP is bound by residues 81–85 and 136–139; these read DCPGH and NKVD. A G4 region spans residues 136–139; it reads NKVD. Residues 173 to 175 form a G5 region; the sequence is SAL.

The protein belongs to the TRAFAC class translation factor GTPase superfamily. Classic translation factor GTPase family. EF-Tu/EF-1A subfamily. In terms of assembly, monomer.

It is found in the cytoplasm. It catalyses the reaction GTP + H2O = GDP + phosphate + H(+). Functionally, GTP hydrolase that promotes the GTP-dependent binding of aminoacyl-tRNA to the A-site of ribosomes during protein biosynthesis. This Chlorobium chlorochromatii (strain CaD3) protein is Elongation factor Tu.